The following is a 307-amino-acid chain: GTPase Era (307 aa).

Residues 7-181 (RCGWVALMGP…VELIRKKLPK (175 aa)) form the Era-type G domain. Residues 15-22 (GPPNAGKS) form a G1 region. Position 15–22 (15–22 (GPPNAGKS)) interacts with GTP. The interval 41-45 (QTTRN) is G2. The interval 62–65 (DTPG) is G3. Residues 62–66 (DTPGL) and 130–133 (NKVD) contribute to the GTP site. The interval 130-133 (NKVD) is G4. The G5 stretch occupies residues 160–162 (ISA). The KH type-2 domain maps to 212–290 (LRQEVPYSVA…HLELWVKVRE (79 aa)).

This sequence belongs to the TRAFAC class TrmE-Era-EngA-EngB-Septin-like GTPase superfamily. Era GTPase family. Monomer.

It localises to the cytoplasm. The protein localises to the cell inner membrane. Its function is as follows. An essential GTPase that binds both GDP and GTP, with rapid nucleotide exchange. Plays a role in 16S rRNA processing and 30S ribosomal subunit biogenesis and possibly also in cell cycle regulation and energy metabolism. The protein is GTPase Era of Desulfovibrio desulfuricans (strain ATCC 27774 / DSM 6949 / MB).